Here is a 542-residue protein sequence, read N- to C-terminus: GMP synthase [glutamine-hydrolyzing] (542 aa).

The Glutamine amidotransferase type-1 domain occupies 28–218 (MIVILDFGSQ…VYHICECEPT (191 aa)). Cys105 acts as the Nucleophile in catalysis. Active-site residues include His192 and Glu194. Residues 219–417 (WTTEAFVDET…IGLPEEIVRR (199 aa)) form the GMPS ATP-PPase domain. 246–252 (SGGVDSS) contacts ATP.

As to quaternary structure, homodimer.

The enzyme catalyses XMP + L-glutamine + ATP + H2O = GMP + L-glutamate + AMP + diphosphate + 2 H(+). Its pathway is purine metabolism; GMP biosynthesis; GMP from XMP (L-Gln route): step 1/1. Its function is as follows. Catalyzes the synthesis of GMP from XMP. This Crocosphaera subtropica (strain ATCC 51142 / BH68) (Cyanothece sp. (strain ATCC 51142)) protein is GMP synthase [glutamine-hydrolyzing].